Here is a 213-residue protein sequence, read N- to C-terminus: MLLPTVRSRIAALSSRVASRAAYSTTVPRFTENAMQPNDPTPRPAKPNVSETDATPVDSMGAWDAALQESTDAAERVRTMQAPNRKGTWASNQKPRAEAMSGPRFEQTIMHLQPTPMAAIELIHKQPVRWVKDKIVSCDGGGGPLGHPRIFINTDKPEIVPCGYCGLPFAHEHHREYLKSLPTSSYPLEPTGAAEEVNENQRVTEGATGYEQR.

Residues 28–38 show a composition bias toward polar residues; it reads PRFTENAMQPN. Disordered stretches follow at residues 28 to 56 and 182 to 213; these read PRFT…DATP and PTSS…YEQR.

This chain is Lactobacillus shifted protein (lbsA), found in Emericella nidulans (strain FGSC A4 / ATCC 38163 / CBS 112.46 / NRRL 194 / M139) (Aspergillus nidulans).